The chain runs to 223 residues: MGQKGCPIGFRTGVTKKWRSLWYGNKQEFGKFLIEDVKIREHLRKKPSCQGAAGFVVRRMSGKIEVTIQTARPGLVIGKKGAEVDLLKEELRKLTGKEVWVEIAEIKRPELNAKLVADNIARQIERRVSFRRAMKKAMQSVMEAGAIGVKIQVSGRLAGAEIARSEWYKNGRVPLHTLRADIDYATASAETTYGIIGVKVWINLGEKTSTANASAGSAVSTAQ.

The KH type-2 domain maps to 39–117 (IREHLRKKPS…RPELNAKLVA (79 aa)).

Belongs to the universal ribosomal protein uS3 family. As to quaternary structure, part of the 30S ribosomal subunit. Forms a tight complex with proteins S10 and S14.

Functionally, binds the lower part of the 30S subunit head. Binds mRNA in the 70S ribosome, positioning it for translation. The protein is Small ribosomal subunit protein uS3 of Chlamydia felis (strain Fe/C-56) (Chlamydophila felis).